A 645-amino-acid polypeptide reads, in one-letter code: Cell pattern formation-associated protein stuA (645 aa).

The segment at 1 to 52 (MNQMQPYADVHQPHMSTAAHAPASGPPAGLSHYSYPHQPSMMQPQQQQHQYG) is disordered. Over residues 18 to 52 (AAHAPASGPPAGLSHYSYPHQPSMMQPQQQQHQYG) the composition is skewed to low complexity. Residues 124–230 (RVTATLWEDE…HDIGALLYHP (107 aa)) form the HTH APSES-type domain. The segment at residues 158-179 (GTKLLNVAGMTRGRRDGILKSE) is a DNA-binding region (H-T-H motif). The segment at 246 to 645 (VDRNRRPDSM…HTLAAQRARR (400 aa)) is disordered. Composition is skewed to polar residues over residues 254–271 (SMQT…SQAP) and 279–288 (MTNSVGSAMS). Over residues 317 to 330 (SASSMMGMGNQGSS) the composition is skewed to low complexity. Over residues 336 to 365 (ANVQQHPQGNQPLSIDTGLSNARSVPTTPA) the composition is skewed to polar residues. Residues 469 to 481 (PYNGNRGPYGYNP) show a composition bias toward low complexity. 2 stretches are compositionally biased toward polar residues: residues 502–542 (SPHQ…NLYN) and 569–584 (YASQ…NSSG). The nuclear localization domain stretch occupies residues 585-613 (KRGRDEEDAETYRPDSVQGDDMGGLKRRK). The segment covering 586-597 (RGRDEEDAETYR) has biased composition (basic and acidic residues).

The protein belongs to the EFG1/PHD1/stuA family.

It localises to the nucleus. Transcription factor that regulates asexual reproduction. Binds the StuA-response elements (StRE) with the consensus sequence 5'-(A/T)CGCG(T/A)N(A/C)-3' at the promoters of target genes. Regulates the expression of several effector genes (AvrLm1, AvrLm6 and AvrLm4-7) during infection stage. The protein is Cell pattern formation-associated protein stuA of Leptosphaeria maculans (strain JN3 / isolate v23.1.3 / race Av1-4-5-6-7-8) (Blackleg fungus).